A 1084-amino-acid polypeptide reads, in one-letter code: Probable sucrose-phosphate synthase 1 (1084 aa).

The span at Gly-25–Val-46 shows a compositional bias: gly residues. Positions Gly-25–Pro-61 are disordered. Over residues Pro-48–Pro-61 the composition is skewed to low complexity.

Belongs to the glycosyltransferase 1 family. As to quaternary structure, homodimer or homotetramer. Expressed in leaves mesophyll cells, scutellum of germinating seedlings and pollen of immature inflorescences.

The catalysed reaction is beta-D-fructose 6-phosphate + UDP-alpha-D-glucose = sucrose 6(F)-phosphate + UDP + H(+). It participates in glycan biosynthesis; sucrose biosynthesis; sucrose from D-fructose 6-phosphate and UDP-alpha-D-glucose: step 1/2. With respect to regulation, activity is regulated by phosphorylation and moderated by concentration of metabolites and light. Plays a role in photosynthetic sucrose synthesis by catalyzing the rate-limiting step of sucrose biosynthesis from UDP-glucose and fructose- 6-phosphate. Involved in the regulation of carbon partitioning in the leaves of plants. May regulate the synthesis of sucrose and therefore play a major role as a limiting factor in the export of photoassimilates out of the leaf. Plays a role for sucrose availability that is essential for plant growth and fiber elongation. The polypeptide is Probable sucrose-phosphate synthase 1 (SPS1) (Oryza sativa subsp. indica (Rice)).